A 128-amino-acid chain; its full sequence is Glycine cleavage system H protein (128 aa).

One can recognise a Lipoyl-binding domain in the interval 25-107 (TFKVGITDHA…YEAGWLFTVR (83 aa)). Residue lysine 66 is modified to N6-lipoyllysine.

This sequence belongs to the GcvH family. In terms of assembly, the glycine cleavage system is composed of four proteins: P, T, L and H. Requires (R)-lipoate as cofactor.

The glycine cleavage system catalyzes the degradation of glycine. The H protein shuttles the methylamine group of glycine from the P protein to the T protein. This is Glycine cleavage system H protein from Kocuria rhizophila (strain ATCC 9341 / DSM 348 / NBRC 103217 / DC2201).